A 300-amino-acid chain; its full sequence is 3-dehydrocarnitine:acetyl-CoA trimethylamine transferase (300 aa).

Residues H51, H53, and E254 each contribute to the Zn(2+) site.

Belongs to the BKACE family. Homotetramer. Zn(2+) is required as a cofactor.

It carries out the reaction 3-dehydrocarnitine + acetyl-CoA = N,N,N-trimethylglycyl-CoA + acetoacetate. It functions in the pathway amine and polyamine metabolism; carnitine metabolism. Functionally, catalyzes the condensation of dehydrocarnitine and acetyl-CoA, forming acetoacetate and betainyl-CoA (N,N,N-trimethylglycyl-CoA). Is involved in a L-carnitine degradation pathway that allows R.meliloti to grow on L-carnitine as the sole source of carbon and nitrogen. This Rhizobium meliloti (strain 1021) (Ensifer meliloti) protein is 3-dehydrocarnitine:acetyl-CoA trimethylamine transferase.